Consider the following 193-residue polypeptide: Ion-translocating oxidoreductase complex subunit A (193 aa).

The next 6 helical transmembrane spans lie at 5 to 25 (ILLI…FLGL), 39 to 59 (IGMG…AYLV), 65 to 85 (IPLE…AVIV), 102 to 122 (LLGI…VALL), 134 to 154 (VLYG…FAAL), and 171 to 191 (SIAL…TGLV).

It belongs to the NqrDE/RnfAE family. As to quaternary structure, the complex is composed of six subunits: RnfA, RnfB, RnfC, RnfD, RnfE and RnfG.

The protein localises to the cell inner membrane. In terms of biological role, part of a membrane-bound complex that couples electron transfer with translocation of ions across the membrane. This chain is Ion-translocating oxidoreductase complex subunit A, found in Actinobacillus pleuropneumoniae serotype 5b (strain L20).